Here is a 153-residue protein sequence, read N- to C-terminus: CRIB domain-containing protein RIC4 (153 aa).

Residues 99–112 (IGVPTNVKHVSHIG) enclose the CRIB domain.

In terms of assembly, interacts with ARAC4/ROP2 and ARAC11/ROP1. In terms of tissue distribution, expressed in roots, leaves, stems, flowers, siliques and pollen.

It is found in the cell membrane. Functionally, functions as a downstream effector of Rho-related GTP binding proteins of the 'Rho of Plants' (ROPs) family. Participates in the propagation of ROP GTPase signals in specific cellular responses. Required for actin cortical microfilament assembly. Activated by ARAC4/ROP2 to promote the assembly of cortical actin microfilaments required for lobe formation and lateral expansion of pavement cells. Interaction with, and activation by ARAC4/ROP2 is inhibited by RIC1. Functions as a downstream effector of ARAC11/ROP1 to promote the assembly of apical F-actin associated with vesicle accumulation in the tip of the growing pollen tube. Counteracts the ARAC11/ROP1-RIC3 pathway, which activates calcium signaling that leads to apical F-actin disassembly associated with exocytosis, to control actin dynamics and pollen tube apical growth. Downstream of ARAC11/ROP1, is involved in the growth responses to the root-colonizing endophytic fungus P.indica. The polypeptide is CRIB domain-containing protein RIC4 (RIC4) (Arabidopsis thaliana (Mouse-ear cress)).